The chain runs to 117 residues: MAKRLERDGQPNRSLRIPAERWRFRIRGLVQGVGYRAGCCRRAQELGLAGWVRNCSDGSVEVQAEGDEQRLTELRVWCEGGPPGARVDSVDGSRVATTGADWFEIRPNHFQGGALTR.

The 87-residue stretch at 21-107 (RWRFRIRGLV…TGADWFEIRP (87 aa)) folds into the Acylphosphatase-like domain. Catalysis depends on residues R36 and N54.

Belongs to the acylphosphatase family.

The enzyme catalyses an acyl phosphate + H2O = a carboxylate + phosphate + H(+). This chain is Acylphosphatase (acyP), found in Synechococcus sp. (strain RCC307).